The following is a 158-amino-acid chain: NAD(P)H-quinone oxidoreductase subunit J, chloroplastic (158 aa).

The protein belongs to the complex I 30 kDa subunit family. NDH is composed of at least 16 different subunits, 5 of which are encoded in the nucleus.

It is found in the plastid. The protein resides in the chloroplast thylakoid membrane. The enzyme catalyses a plastoquinone + NADH + (n+1) H(+)(in) = a plastoquinol + NAD(+) + n H(+)(out). The catalysed reaction is a plastoquinone + NADPH + (n+1) H(+)(in) = a plastoquinol + NADP(+) + n H(+)(out). Its function is as follows. NDH shuttles electrons from NAD(P)H:plastoquinone, via FMN and iron-sulfur (Fe-S) centers, to quinones in the photosynthetic chain and possibly in a chloroplast respiratory chain. The immediate electron acceptor for the enzyme in this species is believed to be plastoquinone. Couples the redox reaction to proton translocation, and thus conserves the redox energy in a proton gradient. The chain is NAD(P)H-quinone oxidoreductase subunit J, chloroplastic from Nandina domestica (Heavenly bamboo).